The primary structure comprises 525 residues: Glucose-6-phosphate isomerase (525 aa).

Catalysis depends on Glu356, which acts as the Proton donor. Residues His387 and Lys502 contribute to the active site.

Belongs to the GPI family.

It is found in the cytoplasm. The enzyme catalyses alpha-D-glucose 6-phosphate = beta-D-fructose 6-phosphate. Its pathway is carbohydrate biosynthesis; gluconeogenesis. It functions in the pathway carbohydrate degradation; glycolysis; D-glyceraldehyde 3-phosphate and glycerone phosphate from D-glucose: step 2/4. Functionally, catalyzes the reversible isomerization of glucose-6-phosphate to fructose-6-phosphate. The chain is Glucose-6-phosphate isomerase from Treponema denticola (strain ATCC 35405 / DSM 14222 / CIP 103919 / JCM 8153 / KCTC 15104).